The primary structure comprises 120 residues: rRNA-processing protein CGR1 (120 aa).

Disordered regions lie at residues 1 to 26 and 81 to 120; these read MVNE…KAEK and ERRE…LKER. Residues 47-106 are a coiled coil; that stretch reads KKQKRLEDKQFKERLKALKDEKEEARQAKITMLKERREKKEENERYERLAAKMHAKKVER. Residues 81 to 96 are compositionally biased toward basic and acidic residues; that stretch reads ERREKKEENERYERLA. A compositionally biased stretch (basic residues) spans 97-113; the sequence is AKMHAKKVERMRRREKR.

It belongs to the CGR1 family.

It localises to the nucleus. The protein resides in the nucleolus. Its function is as follows. Involved in nucleolar integrity and required for processing of the pre-rRNA for the 60S ribosome subunit. The polypeptide is rRNA-processing protein CGR1 (CGR1) (Saccharomyces cerevisiae (strain ATCC 204508 / S288c) (Baker's yeast)).